The chain runs to 681 residues: DNA ligase (681 aa).

NAD(+) contacts are provided by residues 45–49 (DFDFD), 94–95 (SL), and Glu120. Lys122 (N6-AMP-lysine intermediate) is an active-site residue. NAD(+)-binding residues include Arg143, Glu177, Lys289, and Lys313. Residues Cys403, Cys406, Cys421, and Cys426 each coordinate Zn(2+). The region spanning 593–681 (ADQQPFAGQS…SLKIDFKNLI (89 aa)) is the BRCT domain.

It belongs to the NAD-dependent DNA ligase family. LigA subfamily. Mg(2+) serves as cofactor. Mn(2+) is required as a cofactor.

The catalysed reaction is NAD(+) + (deoxyribonucleotide)n-3'-hydroxyl + 5'-phospho-(deoxyribonucleotide)m = (deoxyribonucleotide)n+m + AMP + beta-nicotinamide D-nucleotide.. Its function is as follows. DNA ligase that catalyzes the formation of phosphodiester linkages between 5'-phosphoryl and 3'-hydroxyl groups in double-stranded DNA using NAD as a coenzyme and as the energy source for the reaction. It is essential for DNA replication and repair of damaged DNA. The protein is DNA ligase of Leptospira interrogans serogroup Icterohaemorrhagiae serovar Lai (strain 56601).